The chain runs to 219 residues: Protein ERP1 (219 aa).

Positions 1–22 (MLLTSLLQVFACCLVLPAQVTA) are cleaved as a signal peptide. Over 23-186 (FYYYTSGAER…RDASEAVNSR (164 aa)) the chain is Lumenal. The region spanning 32–131 (RKCFHKELSK…KTKIDVEFQV (100 aa)) is the GOLD domain. The helical transmembrane segment at 187–207 (AMWWIVIQLIVLAVTCGWQMK) threads the bilayer. Topologically, residues 208–219 (HLGKFFVKQKIL) are cytoplasmic.

It belongs to the EMP24/GP25L family. As to quaternary structure, associates with EMP24, ERV25 and ERP2.

It localises to the endoplasmic reticulum membrane. In terms of biological role, involved in vesicular protein trafficking. This chain is Protein ERP1 (ERP1), found in Saccharomyces cerevisiae (strain ATCC 204508 / S288c) (Baker's yeast).